Consider the following 525-residue polypeptide: MNDFWQHCSALLERELTPQQYVTWIKPLAPVAFDASANTLSIAAPNRFKLDWVKSQFSGRIADLAREFWNTPIEVQFVLDPKAGMRSAPAGAAPAAPRAPLAPNGPAATVAAIAANLTANASAAPAAPADVPMTPSAAAARHLNADDADIDLPSLPAHEAAAGRRTWRPGPGAAPANGGEADSMYERSKLNPVLTFDNFVTGKANQLARAAAIQVADNPGISYNPLFLYGGVGLGKTHLIHAIGNQLLLDKAGARIRYIHAEQYVSDVVKAYQRKAFDDFKRYYHSLDLLLIDDIQFFSGKSRTQEEFFYAFEALVANKAQVIITSDTYPKEISGIDDRLISRFDSGLTVAIEPPELEMRVAILMRKAQSEGVNLSEDVAFFVAKHLRSNVRELEGALRKILAYSKFHGREISIELTKEALKDLLTVQNRQISVENIQKTVADFYNIKVADMYSKKRPANIARPRQIAMYLAKELTQKSLPEIGELFGGRDHTTVLHAVRKIADERSKDAQLNHELHVLEQTLKG.

The domain I, interacts with DnaA modulators stretch occupies residues 1-71 (MNDFWQHCSA…ADLAREFWNT (71 aa)). The segment at 71–188 (TPIEVQFVLD…GEADSMYERS (118 aa)) is domain II. Positions 160 to 182 (AAAGRRTWRPGPGAAPANGGEAD) are disordered. Over residues 169-181 (PGPGAAPANGGEA) the composition is skewed to low complexity. The domain III, AAA+ region stretch occupies residues 189-405 (KLNPVLTFDN…GALRKILAYS (217 aa)). Residues glycine 233, glycine 235, lysine 236, and threonine 237 each contribute to the ATP site. The tract at residues 406–525 (KFHGREISIE…LHVLEQTLKG (120 aa)) is domain IV, binds dsDNA.

The protein belongs to the DnaA family. As to quaternary structure, oligomerizes as a right-handed, spiral filament on DNA at oriC.

The protein localises to the cytoplasm. Its function is as follows. Plays an essential role in the initiation and regulation of chromosomal replication. ATP-DnaA binds to the origin of replication (oriC) to initiate formation of the DNA replication initiation complex once per cell cycle. Binds the DnaA box (a 9 base pair repeat at the origin) and separates the double-stranded (ds)DNA. Forms a right-handed helical filament on oriC DNA; dsDNA binds to the exterior of the filament while single-stranded (ss)DNA is stabiized in the filament's interior. The ATP-DnaA-oriC complex binds and stabilizes one strand of the AT-rich DNA unwinding element (DUE), permitting loading of DNA polymerase. After initiation quickly degrades to an ADP-DnaA complex that is not apt for DNA replication. Binds acidic phospholipids. This is Chromosomal replication initiator protein DnaA from Burkholderia cenocepacia (strain ATCC BAA-245 / DSM 16553 / LMG 16656 / NCTC 13227 / J2315 / CF5610) (Burkholderia cepacia (strain J2315)).